The chain runs to 280 residues: Lipase chaperone (280 aa).

A helical transmembrane segment spans residues 5–22 (ALTIITIASGSLGAVYFL).

It belongs to the lipase chaperone family.

The protein resides in the cell inner membrane. In terms of biological role, may be involved in the folding of the extracellular lipase during its passage through the periplasm. The polypeptide is Lipase chaperone (lifO) (Vibrio vulnificus (strain YJ016)).